Consider the following 334-residue polypeptide: MTIPATILDTARTQVLEQGIGLNQQQLMEVLTLPEEQIPDLMELAHQVRLKWCGEEIEVEGIISLKTGGCPEDCHFCSQSGLFESPVRSVWLDIPNLVEAAKQTAKTGATEFCIVAAVKGPDERLMTQLEEAVLAIHSEVEIEVAASIGTLNKEQVDRLAAAGVHRYNHNLETARSYFPEVVTTHTWEERRETLRLVAEAGMEVCSGGILGMGETLEQRAEFAVQLAELDPHEVPMNFLDPRPGTPFADRELMDSRDALRSIGAFRLAMPHTMLRFAGGRELTLGDKGSEQALLGGINAMIVGNYLTTLGRPMEDDLDMMDRLQLPIKVLNKVI.

The 226-residue stretch at 55–280 (EEIEVEGIIS…HTMLRFAGGR (226 aa)) folds into the Radical SAM core domain. [4Fe-4S] cluster is bound by residues C70, C74, and C77. [2Fe-2S] cluster-binding residues include C113, C205, and R275.

It belongs to the radical SAM superfamily. Biotin synthase family. Homodimer. It depends on [4Fe-4S] cluster as a cofactor. Requires [2Fe-2S] cluster as cofactor.

The catalysed reaction is (4R,5S)-dethiobiotin + (sulfur carrier)-SH + 2 reduced [2Fe-2S]-[ferredoxin] + 2 S-adenosyl-L-methionine = (sulfur carrier)-H + biotin + 2 5'-deoxyadenosine + 2 L-methionine + 2 oxidized [2Fe-2S]-[ferredoxin]. Its pathway is cofactor biosynthesis; biotin biosynthesis; biotin from 7,8-diaminononanoate: step 2/2. Catalyzes the conversion of dethiobiotin (DTB) to biotin by the insertion of a sulfur atom into dethiobiotin via a radical-based mechanism. The protein is Biotin synthase of Corynebacterium glutamicum (strain R).